The following is a 453-amino-acid chain: Fibrinogen gamma chain (453 aa).

Positions 1–26 (MSWSLHPRNLILYFYALLFLSSTCVA) are cleaved as a signal peptide. Ser68 carries the post-translational modification Phosphoserine; by FAM20C. Asn78 carries N-linked (GlcNAc...) (complex) asparagine glycosylation. The region spanning 170 to 416 (QIHDITGKDC…KTTMKIIPFN (247 aa)) is the Fibrinogen C-terminal domain. Cysteines 179 and 208 form a disulfide. Asn334 is a glycosylation site (N-linked (GlcNAc...) asparagine; in variant Asahi). Residues Asp344, Asp346, Phe348, and Gly350 each coordinate Ca(2+). Cys352 and Cys365 are disulfide-bonded. The tract at residues 400-422 (TRWYSMKKTTMKIIPFNRLTIGE) is gamma-chain polymerization, binding amino end of another fibrin alpha chain. Positions 423–437 (GQQHHLGGAKQVRPE) are platelet aggregation and Staphylococcus clumping. Gln424 is covalently cross-linked (Isoglutamyl lysine isopeptide (Gln-Lys) (interchain with K-432)). A disordered region spans residues 424–453 (QQHHLGGAKQVRPEHPAETEYDSLYPEDDL). Lys432 participates in a covalent cross-link: Isoglutamyl lysine isopeptide (Lys-Gln) (interchain with Q-424). Residues 442–453 (TEYDSLYPEDDL) are compositionally biased toward acidic residues. Residues Tyr444 and Tyr448 each carry the sulfotyrosine modification.

As to quaternary structure, heterohexamer; disulfide linked. Contains 2 sets of 3 non-identical chains (alpha, beta and gamma). The 2 heterotrimers are in head to head conformation with the N-termini in a small central domain. Conversion of fibrinogen to fibrin is triggered by thrombin, which cleaves fibrinopeptides A and B from alpha and beta chains, and thus exposes the N-terminal polymerization sites responsible for the formation of the soft clot. The soft clot is converted into the hard clot by factor XIIIA which catalyzes the epsilon-(gamma-glutamyl)lysine cross-linking between gamma chains (stronger) and between alpha chains (weaker) of different monomers. In terms of processing, sulfation of C-terminal tyrosines increases affinity for thrombin. In terms of tissue distribution, detected in blood plasma (at protein level).

The protein resides in the secreted. Its function is as follows. Together with fibrinogen alpha (FGA) and fibrinogen beta (FGB), polymerizes to form an insoluble fibrin matrix. Has a major function in hemostasis as one of the primary components of blood clots. In addition, functions during the early stages of wound repair to stabilize the lesion and guide cell migration during re-epithelialization. Was originally thought to be essential for platelet aggregation, based on in vitro studies using anticoagulated blood. However, subsequent studies have shown that it is not absolutely required for thrombus formation in vivo. Enhances expression of SELP in activated platelets via an ITGB3-dependent pathway. Maternal fibrinogen is essential for successful pregnancy. Fibrin deposition is also associated with infection, where it protects against IFNG-mediated hemorrhage. May also facilitate the antibacterial immune response via both innate and T-cell mediated pathways. The chain is Fibrinogen gamma chain (FGG) from Homo sapiens (Human).